Reading from the N-terminus, the 146-residue chain is 3-hydroxyacyl-[acyl-carrier-protein] dehydratase FabZ (146 aa).

Residue His49 is part of the active site.

It belongs to the thioester dehydratase family. FabZ subfamily.

Its subcellular location is the cytoplasm. The catalysed reaction is a (3R)-hydroxyacyl-[ACP] = a (2E)-enoyl-[ACP] + H2O. In terms of biological role, involved in unsaturated fatty acids biosynthesis. Catalyzes the dehydration of short chain beta-hydroxyacyl-ACPs and long chain saturated and unsaturated beta-hydroxyacyl-ACPs. This chain is 3-hydroxyacyl-[acyl-carrier-protein] dehydratase FabZ, found in Pseudomonas aeruginosa (strain LESB58).